The following is a 508-amino-acid chain: Maturase K (508 aa).

The protein belongs to the intron maturase 2 family. MatK subfamily.

The protein resides in the plastid. The protein localises to the chloroplast. Functionally, usually encoded in the trnK tRNA gene intron. Probably assists in splicing its own and other chloroplast group II introns. This Marathrum schiedeanum protein is Maturase K.